A 207-amino-acid polypeptide reads, in one-letter code: Ion-translocating oxidoreductase complex subunit B (207 aa).

The segment at Met-1 to Ser-29 is hydrophobic. Positions Glu-35–Val-93 constitute a 4Fe-4S domain. The [4Fe-4S] cluster site is built by Cys-52, Cys-55, Cys-60, Cys-76, Cys-116, Cys-119, Cys-122, Cys-126, Cys-146, Cys-149, Cys-152, and Cys-156. 4Fe-4S ferredoxin-type domains are found at residues Lys-107–Lys-136 and Ala-137–Val-166.

Belongs to the 4Fe4S bacterial-type ferredoxin family. RnfB subfamily. In terms of assembly, the complex is composed of six subunits: RnfA, RnfB, RnfC, RnfD, RnfE and RnfG. It depends on [4Fe-4S] cluster as a cofactor.

Its subcellular location is the cell inner membrane. Its function is as follows. Part of a membrane-bound complex that couples electron transfer with translocation of ions across the membrane. The chain is Ion-translocating oxidoreductase complex subunit B from Haemophilus ducreyi (strain 35000HP / ATCC 700724).